The following is a 503-amino-acid chain: Galactose/methyl galactoside import ATP-binding protein MglA 2 (503 aa).

2 consecutive ABC transporter domains span residues 11–246 (LEMT…VGRE) and 257–503 (TPKE…SRYL). 43 to 50 (GENGAGKS) contributes to the ATP binding site.

Belongs to the ABC transporter superfamily. Galactose/methyl galactoside importer (TC 3.A.1.2.3) family. The complex is composed of one ATP-binding protein (MglA), two transmembrane proteins (MglC) and a solute-binding protein (MglB).

The protein resides in the cell inner membrane. It carries out the reaction D-galactose(out) + ATP + H2O = D-galactose(in) + ADP + phosphate + H(+). The enzyme catalyses methyl beta-D-galactoside(out) + ATP + H2O = methyl beta-D-galactoside(in) + ADP + phosphate + H(+). Part of the ABC transporter complex MglABC involved in galactose/methyl galactoside import. Responsible for energy coupling to the transport system. The chain is Galactose/methyl galactoside import ATP-binding protein MglA 2 from Photobacterium profundum (strain SS9).